The primary structure comprises 1043 residues: Liprin-alpha-4 (1043 aa).

Coiled coils occupy residues Glu24 to Gly332 and Ile426 to Ser470. A disordered region spans residues Ser498–Ile617. Phosphoserine is present on Ser500. The segment covering Gly505–Ala516 has biased composition (polar residues). Phosphoserine is present on Ser541. Basic and acidic residues predominate over residues Ser544–Ile555. Positions Gln590–Asp602 are enriched in low complexity. 3 consecutive SAM domains span residues Trp688–Leu754, Asn803–Leu867, and Trp891–Leu960. The stretch at Leu864–Val890 forms a coiled coil.

It belongs to the liprin family. Liprin-alpha subfamily. As to quaternary structure, forms homodimers and heterodimers with liprins-alpha and liprins-beta. Interacts with the second PTPase domain of PTPRD, PTPRF and PTPRS. Interacts with RIMS1 and RIMS2. Interacts with GIT1 and GIT2. Interacts with GRIP1. Interacts with KIF1A.

The protein localises to the cytoplasm. The protein resides in the cell surface. May regulate the disassembly of focal adhesions. May localize receptor-like tyrosine phosphatases type 2A at specific sites on the plasma membrane, possibly regulating their interaction with the extracellular environment and their association with substrates. This chain is Liprin-alpha-4 (Ppfia4), found in Rattus norvegicus (Rat).